We begin with the raw amino-acid sequence, 614 residues long: Kelch-like protein 40 (614 aa).

Residues 33–100 (IDCVLKIQGK…IYTSEIEITE (68 aa)) form the BTB domain. The BACK domain maps to 135–237 (CLAIFRLGLL…PQDYIKNKVE (103 aa)). Kelch repeat units follow at residues 353-405 (QLFV…ESEN), 406-455 (SIYL…SHDN), 456-503 (LVYV…VHKG), 504-550 (KIFI…SMNG), and 552-606 (LYAI…AARL).

Belongs to the KLHL40 family. Component of the BCR(KLHL40) E3 ubiquitin ligase complex.

Its subcellular location is the cytoplasm. It localises to the myofibril. The protein resides in the sarcomere. The protein localises to the a band. It is found in the i band. Functionally, substrate-specific adapter of a BCR (BTB-CUL3-RBX1) E3 ubiquitin ligase complex that acts as a key regulator of skeletal muscle development. The protein is Kelch-like protein 40 (klhl40) of Xenopus laevis (African clawed frog).